The primary structure comprises 232 residues: UPF0235 protein At5g63440 (232 aa).

The protein belongs to the UPF0235 family. Interacts with CTN.

It localises to the nucleus speckle. May play a role during early embryonic development. Probably involved in pre-mRNA splicing. This is UPF0235 protein At5g63440 from Arabidopsis thaliana (Mouse-ear cress).